Here is a 294-residue protein sequence, read N- to C-terminus: Cell division control protein 2 homolog A (294 aa).

Positions 4-287 constitute a Protein kinase domain; it reads YEKVEKIGEG…ARNALQHEYF (284 aa). ATP contacts are provided by residues 10–18 and lysine 33; that span reads IGEGTYGVV. Phosphothreonine is present on threonine 14. Residue tyrosine 15 is modified to Phosphotyrosine. Residue aspartate 127 is the Proton acceptor of the active site. Threonine 161 is modified (phosphothreonine; by CAK).

It belongs to the protein kinase superfamily. CMGC Ser/Thr protein kinase family. CDC2/CDKX subfamily.

The catalysed reaction is L-seryl-[protein] + ATP = O-phospho-L-seryl-[protein] + ADP + H(+). It carries out the reaction L-threonyl-[protein] + ATP = O-phospho-L-threonyl-[protein] + ADP + H(+). It catalyses the reaction [DNA-directed RNA polymerase] + ATP = phospho-[DNA-directed RNA polymerase] + ADP + H(+). Its activity is regulated as follows. Phosphorylation at Thr-14 or Tyr-15 inactivates the enzyme, while phosphorylation at Thr-161 activates it. In terms of biological role, plays a key role in the control of the eukaryotic cell cycle. The chain is Cell division control protein 2 homolog A (CDC2A) from Antirrhinum majus (Garden snapdragon).